The following is a 359-amino-acid chain: N-acetylneuraminate-9-phosphate synthase (359 aa).

Residues Lys61, Lys74, and Lys79 each carry the N6-acetyllysine modification. Ser275 is modified (phosphoserine). Position 290 is an N6-acetyllysine (Lys290). Residues 294 to 353 (SVVAKVKIPEGTILTMDMLTVKVGEPKGYPPEDIFNLVGKKVLVTVEEDDTIMEELVDNH) enclose the AFP-like domain.

Ubiquitous.

It catalyses the reaction aldehydo-N-acetyl-D-mannosamine 6-phosphate + phosphoenolpyruvate + H2O = N-acetylneuraminate 9-phosphate + phosphate. The catalysed reaction is aldehydo-D-mannose 6-phosphate + phosphoenolpyruvate + H2O = 3-deoxy-D-glycero-beta-D-galacto-non-2-ulopyranosonate 9-phosphate + phosphate. Its function is as follows. Catalyzes the condensation of phosphoenolpyruvate (PEP) and N-acetylmannosamine 6-phosphate (ManNAc-6-P) to synthesize N-acetylneuraminate-9-phosphate (Neu5Ac-9-P). Also catalyzes the condensation of PEP and D-mannose 6-phosphate (Man-6-P) to produce 3-deoxy-D-glycero-beta-D-galacto-non-2-ulopyranosonate 9-phosphate (KDN-9-P). Neu5Ac-9-P and KDN-9-P are the phosphorylated forms of sialic acids N-acetylneuraminic acid (Neu5Ac) and deaminoneuraminic acid (KDN), respectively. Required for brain and skeletal development. The polypeptide is N-acetylneuraminate-9-phosphate synthase (Homo sapiens (Human)).